A 276-amino-acid chain; its full sequence is UPF0276 protein Caul_0757 (276 aa).

It belongs to the UPF0276 family.

This Caulobacter sp. (strain K31) protein is UPF0276 protein Caul_0757.